The primary structure comprises 347 residues: S-adenosylmethionine:tRNA ribosyltransferase-isomerase (347 aa).

Belongs to the QueA family. In terms of assembly, monomer.

The protein resides in the cytoplasm. The catalysed reaction is 7-aminomethyl-7-carbaguanosine(34) in tRNA + S-adenosyl-L-methionine = epoxyqueuosine(34) in tRNA + adenine + L-methionine + 2 H(+). It functions in the pathway tRNA modification; tRNA-queuosine biosynthesis. Functionally, transfers and isomerizes the ribose moiety from AdoMet to the 7-aminomethyl group of 7-deazaguanine (preQ1-tRNA) to give epoxyqueuosine (oQ-tRNA). The sequence is that of S-adenosylmethionine:tRNA ribosyltransferase-isomerase from Ectopseudomonas mendocina (strain ymp) (Pseudomonas mendocina).